The following is a 272-amino-acid chain: Sulfur carrier protein FdhD (272 aa).

Cysteine 114 functions as the Cysteine persulfide intermediate in the catalytic mechanism.

The protein belongs to the FdhD family.

The protein resides in the cytoplasm. In terms of biological role, required for formate dehydrogenase (FDH) activity. Acts as a sulfur carrier protein that transfers sulfur from IscS to the molybdenum cofactor prior to its insertion into FDH. This chain is Sulfur carrier protein FdhD, found in Mycolicibacterium paratuberculosis (strain ATCC BAA-968 / K-10) (Mycobacterium paratuberculosis).